The following is a 310-amino-acid chain: Ribosomal RNA small subunit methyltransferase H (310 aa).

S-adenosyl-L-methionine is bound by residues 32–34 (GGH), Asp-52, Phe-79, Asp-100, and Gln-107.

The protein belongs to the methyltransferase superfamily. RsmH family.

Its subcellular location is the cytoplasm. The catalysed reaction is cytidine(1402) in 16S rRNA + S-adenosyl-L-methionine = N(4)-methylcytidine(1402) in 16S rRNA + S-adenosyl-L-homocysteine + H(+). Functionally, specifically methylates the N4 position of cytidine in position 1402 (C1402) of 16S rRNA. The protein is Ribosomal RNA small subunit methyltransferase H of Bacillus cereus (strain AH187).